The following is a 220-amino-acid chain: RPA-interacting protein B (220 aa).

The segment at 1 to 45 (MEAERRHRALYKGTTPPWKETYRKRCVERLKSNRSKLLDKFRQVG) is interaction with importin beta. An interaction with RPA1 region spans residues 49-165 (HGGVGGSFLV…QCGVYINTQS (117 aa)). The RIP-type zinc-finger motif lies at 138-213 (CPVCNRNYLT…ASLFMSCQEC (76 aa)).

Interacts directly with the RPA1 subunit of RPA complex. Interacts with importin beta, but not with importin alpha. Forms a complex with the RPA complex and importin beta, which is dissociated by Ran-GTP.

It localises to the nucleus. Functionally, mediates the import of RPA complex into the nucleus, via its interaction with importin beta. This is RPA-interacting protein B (rpain-b) from Xenopus laevis (African clawed frog).